The following is a 297-amino-acid chain: Probable endonuclease 4 (297 aa).

Positions 69, 110, 145, 179, 182, 214, 227, 229, and 259 each coordinate Zn(2+).

It belongs to the AP endonuclease 2 family. The cofactor is Zn(2+).

The catalysed reaction is Endonucleolytic cleavage to 5'-phosphooligonucleotide end-products.. Functionally, endonuclease IV plays a role in DNA repair. It cleaves phosphodiester bonds at apurinic or apyrimidinic (AP) sites, generating a 3'-hydroxyl group and a 5'-terminal sugar phosphate. The polypeptide is Probable endonuclease 4 (Listeria monocytogenes serovar 1/2a (strain ATCC BAA-679 / EGD-e)).